The primary structure comprises 352 residues: Biotin synthase (352 aa).

Residues 44–262 (NRVQVSTLLS…LAVARLLMPK (219 aa)) form the Radical SAM core domain. The [4Fe-4S] cluster site is built by cysteine 59, cysteine 63, and cysteine 66. The [2Fe-2S] cluster site is built by cysteine 103, cysteine 134, cysteine 194, and arginine 266.

The protein belongs to the radical SAM superfamily. Biotin synthase family. In terms of assembly, homodimer. The cofactor is [4Fe-4S] cluster. [2Fe-2S] cluster serves as cofactor.

It catalyses the reaction (4R,5S)-dethiobiotin + (sulfur carrier)-SH + 2 reduced [2Fe-2S]-[ferredoxin] + 2 S-adenosyl-L-methionine = (sulfur carrier)-H + biotin + 2 5'-deoxyadenosine + 2 L-methionine + 2 oxidized [2Fe-2S]-[ferredoxin]. The protein operates within cofactor biosynthesis; biotin biosynthesis; biotin from 7,8-diaminononanoate: step 2/2. In terms of biological role, catalyzes the conversion of dethiobiotin (DTB) to biotin by the insertion of a sulfur atom into dethiobiotin via a radical-based mechanism. This is Biotin synthase from Pseudomonas putida (strain W619).